Here is a 119-residue protein sequence, read N- to C-terminus: Beta-2-microglobulin (119 aa).

A signal peptide spans 1 to 20 (MSPSVALAVLALLSLSGLEA). The Ig-like C1-type domain occupies 25–114 (PKIQVYSRHP…VTLSGPRTVK (90 aa)). C45 and C100 form a disulfide bridge.

It belongs to the beta-2-microglobulin family. Heterodimer of an alpha chain and a beta chain. Beta-2-microglobulin is the beta-chain of major histocompatibility complex class I molecules.

The protein localises to the secreted. In terms of biological role, component of the class I major histocompatibility complex (MHC). Involved in the presentation of peptide antigens to the immune system. The polypeptide is Beta-2-microglobulin (B2M) (Macaca fascicularis (Crab-eating macaque)).